A 919-amino-acid chain; its full sequence is Probable dipeptidyl-aminopeptidase B (919 aa).

A compositionally biased stretch (basic and acidic residues) spans 1 to 10 (MRPSDDHGET). The interval 1-50 (MRPSDDHGETSEFLPITRSRSVSAASQTSTDSSLSTESLFPGEQKPFPNV) is disordered. The Cytoplasmic portion of the chain corresponds to 1-92 (MRPSDDHGET…AATGGGRARR (92 aa)). Over residues 21–38 (SVSAASQTSTDSSLSTES) the composition is skewed to low complexity. A helical; Signal-anchor for type II membrane protein membrane pass occupies residues 93–113 (IFWILVLLCLGGWLLAFALFL). Over 114 to 919 (TGGRANYQTA…MKRSLPLLYP (806 aa)) the chain is Vacuolar. Asn200, Asn352, and Asn643 each carry an N-linked (GlcNAc...) asparagine glycan. The active-site Charge relay system is the Ser757. N-linked (GlcNAc...) asparagine glycosylation occurs at Asn811. Catalysis depends on charge relay system residues Asp834 and His867.

The protein belongs to the peptidase S9B family.

The protein localises to the vacuole membrane. The catalysed reaction is Release of an N-terminal dipeptide, Xaa-Yaa-|-Zaa-, from a polypeptide, preferentially when Yaa is Pro, provided Zaa is neither Pro nor hydroxyproline.. Functionally, type IV dipeptidyl-peptidase which removes N-terminal dipeptides sequentially from polypeptides having unsubstituted N-termini provided that the penultimate residue is proline. The chain is Probable dipeptidyl-aminopeptidase B (dapB) from Neosartorya fischeri (strain ATCC 1020 / DSM 3700 / CBS 544.65 / FGSC A1164 / JCM 1740 / NRRL 181 / WB 181) (Aspergillus fischerianus).